Consider the following 352-residue polypeptide: Anthranilate phosphoribosyltransferase (352 aa).

5-phospho-alpha-D-ribose 1-diphosphate-binding positions include Gly-82, 85–86, Ser-90, 92–95, 110–118, and Gly-122; these read GD, NIST, and KHGNRAVTG. Residue Gly-82 participates in anthranilate binding. Ser-94 contacts Mg(2+). Residue Asn-113 coordinates anthranilate. Arg-168 is an anthranilate binding site. Positions 232 and 233 each coordinate Mg(2+).

This sequence belongs to the anthranilate phosphoribosyltransferase family. In terms of assembly, homodimer. It depends on Mg(2+) as a cofactor.

The enzyme catalyses N-(5-phospho-beta-D-ribosyl)anthranilate + diphosphate = 5-phospho-alpha-D-ribose 1-diphosphate + anthranilate. It participates in amino-acid biosynthesis; L-tryptophan biosynthesis; L-tryptophan from chorismate: step 2/5. In terms of biological role, catalyzes the transfer of the phosphoribosyl group of 5-phosphorylribose-1-pyrophosphate (PRPP) to anthranilate to yield N-(5'-phosphoribosyl)-anthranilate (PRA). The sequence is that of Anthranilate phosphoribosyltransferase from Methanothermobacter thermautotrophicus (strain ATCC 29096 / DSM 1053 / JCM 10044 / NBRC 100330 / Delta H) (Methanobacterium thermoautotrophicum).